Here is a 249-residue protein sequence, read N- to C-terminus: Mannose-binding protein A (249 aa).

Positions 1–20 (MLLFSSLPVLLLCVVTASYS) are cleaved as a signal peptide. Residues 41-102 (VTNGTPGRDG…KGDPGDTSGV (62 aa)) are disordered. Positions 48–60 (RDGRDGPKGEKGE) are enriched in basic and acidic residues. Pro54 bears the 4-hydroxyproline mark. A 5-hydroxylysine mark is found at Lys55 and Lys58. 2 O-linked (Gal...) hydroxylysine glycosylation sites follow: Lys55 and Lys58. 4-hydroxyproline is present on residues Pro61, Pro72, Pro78, and Pro89. Positions 64–98 (GFRGSQGPPGKMGPPGNIGETGPLGPKGQKGDPGD) constitute a Collagen-like domain. 2 positions are modified to 5-hydroxylysine: Lys90 and Lys93. 2 O-linked (Gal...) hydroxylysine glycosylation sites follow: Lys90 and Lys93. Residues 135–246 (SRKKLYVTNG…CSSSFLAVCE (112 aa)) form the C-type lectin domain. 2 disulfide bridges follow: Cys156–Cys245 and Cys223–Cys237. Residues Asp189, Glu193, Glu213, Asn215, Asp216, Glu221, Asp222, Asn233, and Asp234 each contribute to the Ca(2+) site. The segment at 213 to 221 (EPNDHGSGE) is calcium-dependent carbohydrate binding.

In terms of assembly, interacts with MASP1 and MASP2. Forms oligomeric complexes of 3, 4, 5 or, predominantly, 6 homotrimers. The homotrimers appear as globular heads that are connected to a central hub by thin stalks. Hydroxylated on lysine and proline residues within the collagen-like domain. Post-translationally, O-glycosylated. O-linked glycans on hydroxylysine residues consist of Glc-Gal disaccharides bound to the oxygen atom of post-translationally added hydroxyl groups. In terms of tissue distribution, detected in blood serum (at protein level). Expressed in liver. Weakly expressed in lung, testis and brain. Not detected in bone marrow and heart.

It localises to the secreted. Its function is as follows. Calcium-dependent lectin. Plays a role in the innate immune response by binding mannose, fucose and N-acetylglucosamine on bacteria, including strains of A.suis, H.parasuis and A.pleuropneumoniae, and activates the lectin complement pathway. According to some authors, it only binds mannose. This chain is Mannose-binding protein A, found in Sus scrofa (Pig).